The chain runs to 421 residues: Structure-specific endonuclease subunit SLX1 (421 aa).

The GIY-YIG domain maps to 13–95; it reads AFYCCYLLRS…QHTKESRHAE (83 aa). Disordered regions lie at residues 34–57 and 96–120; these read TPEPSRRLAQHNGDRTGGARKTSS and VERCESEQLGTRGSSRTGKEVKRAG. The SLX1-type zinc finger occupies 225-280; the sequence is CGVCKQRLNPRNDMIAICSHSLCRCASHLLCLSAHFLEAAGFIGKLIPKEGTCPAC. Over residues 310 to 322 the composition is skewed to basic residues; sequence RRRTEQVGKRKIS. The disordered stretch occupies residues 310 to 339; it reads RRRTEQVGKRKISNHVSSEKGESEASMPST.

This sequence belongs to the SLX1 family. In terms of assembly, forms a heterodimer with SLX4. A divalent metal cation is required as a cofactor.

The protein localises to the nucleus. Its function is as follows. Catalytic subunit of the SLX1-SLX4 structure-specific endonuclease that resolves DNA secondary structures generated during DNA repair and recombination. Has endonuclease activity towards branched DNA substrates, introducing single-strand cuts in duplex DNA close to junctions with ss-DNA. The sequence is that of Structure-specific endonuclease subunit SLX1 from Ajellomyces capsulatus (strain G186AR / H82 / ATCC MYA-2454 / RMSCC 2432) (Darling's disease fungus).